We begin with the raw amino-acid sequence, 492 residues long: Monocarboxylate transporter 3 (492 aa).

The Cytoplasmic segment spans residues 1–14; that stretch reads MGAGGPRRGAGPPD. The chain crosses the membrane as a helical span at residues 15 to 35; the sequence is GGWGWVVLGACFVVTGFAYGF. The Extracellular portion of the chain corresponds to 36-58; that stretch reads PKAVSVFFRELKRDFGAGYSDTA. The helical transmembrane segment at 59 to 79 threads the bilayer; the sequence is WVSSIMLAMLYGTGPLSSILV. The Cytoplasmic portion of the chain corresponds to 80 to 85; it reads TRFGCR. A helical transmembrane segment spans residues 86 to 106; it reads PVMLAGGLLASAGMILASFAS. The Extracellular portion of the chain corresponds to 107-115; it reads RLVELYLTA. Residues 116–136 form a helical membrane-spanning segment; that stretch reads GVLTGLGLALNFQPSLIMLGL. The Cytoplasmic portion of the chain corresponds to 137–146; the sequence is YFERRRPLAN. A helical membrane pass occupies residues 147 to 167; it reads GLAAAGSPVFLSMLSPLGQLL. The Extracellular segment spans residues 168–172; that stretch reads GERFG. The helical transmembrane segment at 173–193 threads the bilayer; it reads WRGGFLLFGGLLLHCCACGAV. The Cytoplasmic segment spans residues 194 to 228; the sequence is MRPPPGPPPRRDPSPHGGPARRRRLLDVAVCTDRA. The chain crosses the membrane as a helical span at residues 229–249; the sequence is FVVYVVTKFLMALGLFVPAIL. At 250-257 the chain is on the extracellular side; sequence LVNYAKDA. The helical transmembrane segment at 258–278 threads the bilayer; that stretch reads GVPDAEAAFLLSIVGFVDIVA. The Cytoplasmic segment spans residues 279-293; that stretch reads RPACGALAGLGRLRP. A helical membrane pass occupies residues 294-314; that stretch reads HVPYLFSLALLANGLTDLISA. Topologically, residues 315-318 are extracellular; it reads RARS. The helical transmembrane segment at 319 to 339 threads the bilayer; that stretch reads YGTLVAFCIAFGLSYGMVGAL. Residues 340–352 lie on the Cytoplasmic side of the membrane; it reads QFEVLMATVGAPR. The chain crosses the membrane as a helical span at residues 353-373; that stretch reads FPSALGLVLLVEAVAVLIGPP. Topologically, residues 374 to 386 are extracellular; it reads SAGRLVDALKNYE. Residues 387–407 traverse the membrane as a helical segment; it reads IIFYLAGSEVALAGVFMAVTT. At 408–492 the chain is on the cytoplasmic side; that stretch reads YCCLRCSKNI…GGHEARGQKA (85 aa). The disordered stretch occupies residues 419-492; sequence SGRSAEGGAS…GGHEARGQKA (74 aa). Basolateral sorting signal stretches follow at residues 426-460 and 461-482; these read GASD…VLSP and RAGS…HESI. The segment covering 476-492 has biased composition (basic and acidic residues); the sequence is ELDHESIGGHEARGQKA.

It belongs to the major facilitator superfamily. Monocarboxylate porter (TC 2.A.1.13) family. Expressed exclusively in retinal pigment epithelium and choroid plexus epithelium.

The protein resides in the basolateral cell membrane. The catalysed reaction is (S)-lactate(in) + H(+)(in) = (S)-lactate(out) + H(+)(out). Its function is as follows. Probable retinal pigment epithelium (RPE)-specific proton-coupled L-lactate transporter. May facilitate transport of lactate and H(+) out of the retina and could therefore play an essential role in maintenance of metabolic and ionic homeostasis of the outer retina. This chain is Monocarboxylate transporter 3 (Slc16a8), found in Mus musculus (Mouse).